The chain runs to 143 residues: Large ribosomal subunit protein uL11 (143 aa).

It belongs to the universal ribosomal protein uL11 family. In terms of assembly, part of the ribosomal stalk of the 50S ribosomal subunit. Interacts with L10 and the large rRNA to form the base of the stalk. L10 forms an elongated spine to which L12 dimers bind in a sequential fashion forming a multimeric L10(L12)X complex. In terms of processing, one or more lysine residues are methylated.

Functionally, forms part of the ribosomal stalk which helps the ribosome interact with GTP-bound translation factors. This chain is Large ribosomal subunit protein uL11, found in Azotobacter vinelandii (strain DJ / ATCC BAA-1303).